A 435-amino-acid chain; its full sequence is Xylose isomerase (435 aa).

Catalysis depends on residues histidine 100 and aspartate 103. 7 residues coordinate Mg(2+): glutamate 231, glutamate 267, histidine 270, aspartate 295, aspartate 306, aspartate 308, and aspartate 338.

Belongs to the xylose isomerase family. Homotetramer. Requires Mg(2+) as cofactor.

It is found in the cytoplasm. It carries out the reaction alpha-D-xylose = alpha-D-xylulofuranose. The chain is Xylose isomerase from Brucella suis (strain ATCC 23445 / NCTC 10510).